The chain runs to 382 residues: Secreted triacylglycerol lipase LIP5 (382 aa).

An intrachain disulfide couples Cys40 to Cys211. Asn115 carries N-linked (GlcNAc...) asparagine glycosylation. Residue Ser124 is the Nucleophile of the active site. 2 N-linked (GlcNAc...) asparagine glycosylation sites follow: Asn157 and Asn232. Residues Asp271 and His305 contribute to the active site. Asn346 carries N-linked (GlcNAc...) asparagine glycosylation.

It belongs to the AB hydrolase superfamily. Lipase family. Class Lip subfamily.

It is found in the secreted. It catalyses the reaction a triacylglycerol + H2O = a diacylglycerol + a fatty acid + H(+). It carries out the reaction a monoacylglycerol + H2O = glycerol + a fatty acid + H(+). The enzyme catalyses a diacylglycerol + H2O = a monoacylglycerol + a fatty acid + H(+). Its function is as follows. Secreted lipase that hydrolyzes acylglycerol lipids such as triacylglycerols and consequently releases free fatty acid. Can hydrolyze 4-nitrophenyl palmitate to release 4-nitrophenol and palmitoic acid. Due to an absence of fatty acid synthase genes in Malassezia species, secretory lipases are essential for the yeast to generate free fatty acids from degradation of sebum and assimilate them as lipid sources for growth. Plays important roles not only in lipid metabolism but also in the immune response of host cells and pathogenesis. This is Secreted triacylglycerol lipase LIP5 from Malassezia furfur (Pityriasis versicolor infection agent).